A 159-amino-acid chain; its full sequence is Protein B1 (159 aa).

Residues 1 to 15 (MQKNMKTKKTKKRGR) are compositionally biased toward basic residues. Disordered stretches follow at residues 1–100 (MQKN…RTRE) and 133–159 (PGHGPHASLRSHLRARSALRPPPDPPR). The span at 16–31 (KEGNTPETERRMEPAR) shows a compositional bias: basic and acidic residues. Residues 85 to 96 (RGRHIHTRGART) are compositionally biased toward basic residues.

This is Protein B1 (B1) from Human herpesvirus 6B (strain Z29) (HHV-6 variant B).